The primary structure comprises 401 residues: Coenzyme A biosynthesis bifunctional protein CoaBC (401 aa).

Positions 1–190 are phosphopantothenoylcysteine decarboxylase; it reads MQTLAGKKIL…FQPKPLQDKS (190 aa). Cysteine 159 functions as the Proton donor in the catalytic mechanism. The interval 191–401 is phosphopantothenate--cysteine ligase; it reads ILITAGPTRE…LKQIQTLMGH (211 aa). Residues aspartate 279, lysine 289, 307-310, phenylalanine 326, lysine 340, and lysine 344 each bind CTP; that span reads PDIV.

In the N-terminal section; belongs to the HFCD (homo-oligomeric flavin containing Cys decarboxylase) superfamily. It in the C-terminal section; belongs to the PPC synthetase family. Mg(2+) serves as cofactor. The cofactor is FMN.

It catalyses the reaction N-[(R)-4-phosphopantothenoyl]-L-cysteine + H(+) = (R)-4'-phosphopantetheine + CO2. The enzyme catalyses (R)-4'-phosphopantothenate + L-cysteine + CTP = N-[(R)-4-phosphopantothenoyl]-L-cysteine + CMP + diphosphate + H(+). It participates in cofactor biosynthesis; coenzyme A biosynthesis; CoA from (R)-pantothenate: step 2/5. The protein operates within cofactor biosynthesis; coenzyme A biosynthesis; CoA from (R)-pantothenate: step 3/5. Functionally, catalyzes two sequential steps in the biosynthesis of coenzyme A. In the first step cysteine is conjugated to 4'-phosphopantothenate to form 4-phosphopantothenoylcysteine. In the second step the latter compound is decarboxylated to form 4'-phosphopantotheine. The sequence is that of Coenzyme A biosynthesis bifunctional protein CoaBC from Vibrio vulnificus (strain CMCP6).